A 597-amino-acid polypeptide reads, in one-letter code: Nuclear receptor subfamily 4 group A member 1 (597 aa).

The interval 1 to 22 (MPCIQAQYGTPATSPGPRDHLT) is disordered. A required for nuclear import region spans residues 170–465 (RVWTEQLPKA…PGEGKLIFCS (296 aa)). Residues 263 to 338 (EGRCAVCGDN…VGMVKEVVRT (76 aa)) constitute a DNA-binding region (nuclear receptor). 2 NR C4-type zinc fingers span residues 266 to 286 (CAVC…CEGC) and 302 to 326 (CLAN…FQKC). The interval 267–353 (AVCGDNASCQ…RRGRLPSKPK (87 aa)) is required for binding NBRE-containing DNA. The interval 298–360 (AKYICLANKD…KPKQPPDASP (63 aa)) is required for the interaction with RXRA. Ser340 is subject to Phosphoserine; by PKA. Residues 341–360 (LKGRRGRLPSKPKQPPDASP) form a disordered region. Position 350 is a phosphoserine; by PKA, RPS6KA1 and RPS6KA3 (Ser350). The 236-residue stretch at 359 to 594 (SPTNLLTSLI…PIVDKIFMDT (236 aa)) folds into the NR LBD domain. Positions 520-543 (PRRVEELQNRIASCLKEHMAAVAG) are binds lipopolysaccharide. Residues 583–594 (PPPIVDKIFMDT) form an AF-2 region.

Belongs to the nuclear hormone receptor family. NR4 subfamily. Binds the NGFI-B response element (NBRE) as a monomer. Binds the Nur response element (NurRE), consisting of two inverse NBRE-related octanucleotide repeats separated by 6 base-pairs, as a dimer. Interacts (via N-terminus) with NLRP3 (via LRR repeat domain); the interaction is direct, requires binding of NR4A1/Nur77 to NBRE-containing dsDNA and lipopolysaccharide, and leads to non-canonical NLRP3 inflammasome activation. Interacts with GADD45GIP1. Interacts with STK11. Interacts with IFI27. Heterodimer (via DNA-binding domain) with RXRA (via C-terminus); DNA-binding of the heterodimer is enhanced by 9-cis retinoic acid. Competes for the RXRA interaction with EP300 and thereby attenuates EP300 mediated acetylation of RXRA. Interacts with NCOA1. Interacts with NCOA2. Interacts with NCOA3. The cofactor is Zn(2+). Post-translationally, phosphorylated at Ser-350 by RPS6KA1 and RPS6KA3 in response to mitogenic or stress stimuli. Phosphorylation of Ser-350 results in decrease in NBRE binding while phosphorylation of Ser-340 has little effect on it. In terms of processing, acetylated by p300/CBP, acetylation increases stability. Deacetylated by HDAC1. Expressed in lung, brain and superior cervical ganglia. High levels are seen in the adrenal tissue.

The protein resides in the nucleus. It is found in the cytoplasm. Its subcellular location is the cytosol. The protein localises to the mitochondrion. In terms of biological role, orphan nuclear receptor. Binds the NGFI-B response element (NBRE) 5'-AAAGGTCA-3'. Binds 9-cis-retinoic acid outside of its ligand-binding (NR LBD) domain. Participates in energy homeostasis by sequestrating the kinase STK11 in the nucleus, thereby attenuating cytoplasmic AMPK activation. Regulates the inflammatory response in macrophages by regulating metabolic adaptations during inflammation, including repressing the transcription of genes involved in the citric acid cycle (TCA). Inhibits NF-kappa-B signaling by binding to low-affinity NF-kappa-B binding sites, such as at the IL2 promoter. May act concomitantly with NR4A2 in regulating the expression of delayed-early genes during liver regeneration. Plays a role in the vascular response to injury. Its function is as follows. In the cytosol, upon its detection of both bacterial lipopolysaccharide (LPS) and NBRE-containing mitochondrial DNA released by GSDMD pores during pyroptosis, it promotes non-canonical NLRP3 inflammasome activation by stimulating association of NLRP3 and NEK7. The polypeptide is Nuclear receptor subfamily 4 group A member 1 (Nr4a1) (Rattus norvegicus (Rat)).